Consider the following 329-residue polypeptide: Diaminopimelate epimerase (329 aa).

2 residues coordinate substrate: N14 and N73. The active-site Proton donor is the C82. Substrate contacts are provided by residues 83 to 84 (GN), N170, N206, and 224 to 225 (ER). Residue C233 is the Proton acceptor of the active site. 234-235 (GT) is a binding site for substrate.

The protein belongs to the diaminopimelate epimerase family. As to quaternary structure, homodimer.

The protein localises to the cytoplasm. The enzyme catalyses (2S,6S)-2,6-diaminopimelate = meso-2,6-diaminopimelate. The protein operates within amino-acid biosynthesis; L-lysine biosynthesis via DAP pathway; DL-2,6-diaminopimelate from LL-2,6-diaminopimelate: step 1/1. Functionally, catalyzes the stereoinversion of LL-2,6-diaminopimelate (L,L-DAP) to meso-diaminopimelate (meso-DAP), a precursor of L-lysine and an essential component of the bacterial peptidoglycan. This is Diaminopimelate epimerase from Listeria monocytogenes serotype 4a (strain HCC23).